Reading from the N-terminus, the 192-residue chain is uncharacterized protein (192 aa).

In terms of domain architecture, Nudix hydrolase spans 29–160 (HRQAAVLIPI…PLDIYRRGDS (132 aa)). The Nudix box signature appears at 67-89 (GAVDDTDASAIAAALREAEEEVA). Mg(2+) contacts are provided by Glu83 and Glu87.

This sequence belongs to the Nudix hydrolase family. PCD1 subfamily. Mn(2+) serves as cofactor. It depends on Mg(2+) as a cofactor.

In terms of biological role, probably mediates the hydrolysis of some nucleoside diphosphate derivatives. This is an uncharacterized protein from Escherichia coli (strain K12).